Reading from the N-terminus, the 320-residue chain is o-succinylbenzoate synthase (320 aa).

Lysine 133 functions as the Proton donor in the catalytic mechanism. Positions 161, 190, and 213 each coordinate Mg(2+). Catalysis depends on lysine 235, which acts as the Proton acceptor.

This sequence belongs to the mandelate racemase/muconate lactonizing enzyme family. MenC type 1 subfamily. It depends on a divalent metal cation as a cofactor.

It catalyses the reaction (1R,6R)-6-hydroxy-2-succinyl-cyclohexa-2,4-diene-1-carboxylate = 2-succinylbenzoate + H2O. It functions in the pathway quinol/quinone metabolism; 1,4-dihydroxy-2-naphthoate biosynthesis; 1,4-dihydroxy-2-naphthoate from chorismate: step 4/7. The protein operates within quinol/quinone metabolism; menaquinone biosynthesis. Converts 2-succinyl-6-hydroxy-2,4-cyclohexadiene-1-carboxylate (SHCHC) to 2-succinylbenzoate (OSB). The sequence is that of o-succinylbenzoate synthase from Salmonella paratyphi B (strain ATCC BAA-1250 / SPB7).